A 500-amino-acid polypeptide reads, in one-letter code: MEAFNLHKKAVSRDYIVKPRLEYRTVSAVNGPLIILQNVKSPRFAEIVNVTLGDGSVRRGQVLEINQDKAVVQIFEGTTGIDNKKTVCQFTGEILKTPVSLDMLGRVFNGSGKPIDGGPPILPEAYLDIQGQPINPQSRTYPEEMFETGISSIDVMNSIARGQKIPLFSGAGLPHNEVAAQICRQVCLVSTCTLVKRSGKDEEDFAIVFAAMGVNMETARFFRQDFEENGAMERVTLFLNLANDPTIERIITPRLALTFAEYLAYEKGKHVLVILTDMSAYADALREVSAAREEVPGRRGYPGYMYTDLATIYERAGRVEGRPGSITQLPILTMPNDDITHPIPDLTGYITEEQIYLDRQLHNRQIYPPINVLPSLSRLMKSAIGEGMTRKDHSDVSNQLYAAYAMGKDALAMRAVVGVEALSQEDLLYLEFHDKFERRFVNQGAYERRDIYTSLDMAWDLLRIFPVQMLRRIPEKILQEYYHRTSNYEHKENKPHSSRS.

The protein belongs to the ATPase alpha/beta chains family. In terms of assembly, V-ATPase is a heteromultimeric enzyme composed of a peripheral catalytic V1 complex (main components: subunits A, B, C, D, E, and F) attached to an integral membrane V0 proton pore complex (main component: the proteolipid protein).

Its function is as follows. Non-catalytic subunit of the peripheral V1 complex of vacuolar ATPase. V-ATPase is responsible for acidifying a variety of intracellular compartments in eukaryotic cells. The sequence is that of V-type proton ATPase subunit B from Cyanidium caldarium (Red alga).